The primary structure comprises 208 residues: Uracil phosphoribosyltransferase (208 aa).

5-phospho-alpha-D-ribose 1-diphosphate contacts are provided by residues R78, R103, and D130–S138. Residues I193 and G198 to A200 contribute to the uracil site. D199 lines the 5-phospho-alpha-D-ribose 1-diphosphate pocket.

The protein belongs to the UPRTase family. Mg(2+) is required as a cofactor.

The catalysed reaction is UMP + diphosphate = 5-phospho-alpha-D-ribose 1-diphosphate + uracil. The protein operates within pyrimidine metabolism; UMP biosynthesis via salvage pathway; UMP from uracil: step 1/1. Its activity is regulated as follows. Allosterically activated by GTP. Catalyzes the conversion of uracil and 5-phospho-alpha-D-ribose 1-diphosphate (PRPP) to UMP and diphosphate. This chain is Uracil phosphoribosyltransferase, found in Tolumonas auensis (strain DSM 9187 / NBRC 110442 / TA 4).